Here is a 77-residue protein sequence, read N- to C-terminus: Small ribosomal subunit protein bS18 (77 aa).

This sequence belongs to the bacterial ribosomal protein bS18 family. As to quaternary structure, part of the 30S ribosomal subunit. Forms a tight heterodimer with protein bS6.

Its function is as follows. Binds as a heterodimer with protein bS6 to the central domain of the 16S rRNA, where it helps stabilize the platform of the 30S subunit. The protein is Small ribosomal subunit protein bS18 of Lactobacillus helveticus (strain DPC 4571).